The following is a 331-amino-acid chain: UPF0324 membrane protein SAS0317 (331 aa).

Helical transmembrane passes span 9-26 (FMIGLTLTFIVALFSFLA), 31-48 (ILDKVGALTIAILIAILY), 69-88 (LLRFAIILYGLKLNIFDIIG), 93-115 (LLAIDVGVVIFSIVMMLFVNKLL), 122-144 (ALLLGVGTGVCGAAAIAAVAPIF), 154-176 (SIGIIALIGTIFSLIYTAIYAIF), 183-202 (YGAWSGVSLHEIAHVVLAGG), 217-234 (LGRVFLLIPLTIVLILIM), 247-269 (ISIPYFLIGFVIMALVNTYVTIP), 273-295 (LNILNTVSTICLLMAMVALGLNV), and 308-330 (LMTIIITSICLSSLAFIVVHWLY).

The protein belongs to the UPF0324 family.

The protein resides in the cell membrane. This is UPF0324 membrane protein SAS0317 from Staphylococcus aureus (strain MSSA476).